Consider the following 175-residue polypeptide: Dof zinc finger protein DOF1.5 (175 aa).

The tract at residues 29-57 (EEQQQQQQPELQATTAVRSPSSDLTAEKR) is disordered. Positions 37–52 (PELQATTAVRSPSSDL) are enriched in polar residues. The Dof-type zinc finger occupies 62-116 (IPCPRCKSMETKFCYFNNYNVNQPRHFCKGCQRYWTAGGALRNVPVGAGRRKSKP). Cys-64, Cys-67, Cys-89, and Cys-92 together coordinate Zn(2+). The short motif at 162 to 168 (PVKRLRC) is the Nuclear localization signal element.

Its subcellular location is the nucleus. Transcription factor that binds specifically to a 5'-AA[AG]G-3' consensus core sequence. Acts as a negative regulator in the phytochrome-mediated light responses. Controls phyB-mediated end-of-day response and the phyA-mediated anthocyanin accumulation. Not involved in direct flowering time regulation. The polypeptide is Dof zinc finger protein DOF1.5 (DOF1.5) (Arabidopsis thaliana (Mouse-ear cress)).